The chain runs to 108 residues: Glutaredoxin-1 (108 aa).

The region spanning 3–106 is the Glutaredoxin domain; that stretch reads EEFVQQRLAN…DILSSIGVLR (104 aa). A disulfide bond links Cys-23 and Cys-26.

It belongs to the glutaredoxin family.

The protein localises to the virion. Its function is as follows. Displays thioltransferase and dehydroascorbate reductase activities. In Vaccinia virus (strain Copenhagen) (VACV), this protein is Glutaredoxin-1 (OPG075).